The primary structure comprises 541 residues: Glucose-6-phosphate isomerase (541 aa).

Residue Glu-346 is the Proton donor of the active site. Residues His-377 and Lys-506 contribute to the active site.

This sequence belongs to the GPI family.

The protein resides in the cytoplasm. The enzyme catalyses alpha-D-glucose 6-phosphate = beta-D-fructose 6-phosphate. It functions in the pathway carbohydrate biosynthesis; gluconeogenesis. It participates in carbohydrate degradation; glycolysis; D-glyceraldehyde 3-phosphate and glycerone phosphate from D-glucose: step 2/4. Functionally, catalyzes the reversible isomerization of glucose-6-phosphate to fructose-6-phosphate. This is Glucose-6-phosphate isomerase from Agrobacterium fabrum (strain C58 / ATCC 33970) (Agrobacterium tumefaciens (strain C58)).